The chain runs to 230 residues: 5'-methylthioadenosine/S-adenosylhomocysteine nucleosidase (230 aa).

Glutamate 12 functions as the Proton acceptor in the catalytic mechanism. Residues glycine 78, methionine 153, and 174–175 (ME) contribute to the substrate site. Residue aspartate 198 is the Proton donor of the active site.

This sequence belongs to the PNP/UDP phosphorylase family. MtnN subfamily.

The enzyme catalyses S-adenosyl-L-homocysteine + H2O = S-(5-deoxy-D-ribos-5-yl)-L-homocysteine + adenine. It catalyses the reaction S-methyl-5'-thioadenosine + H2O = 5-(methylsulfanyl)-D-ribose + adenine. The catalysed reaction is 5'-deoxyadenosine + H2O = 5-deoxy-D-ribose + adenine. The protein operates within amino-acid biosynthesis; L-methionine biosynthesis via salvage pathway; S-methyl-5-thio-alpha-D-ribose 1-phosphate from S-methyl-5'-thioadenosine (hydrolase route): step 1/2. Catalyzes the irreversible cleavage of the glycosidic bond in both 5'-methylthioadenosine (MTA) and S-adenosylhomocysteine (SAH/AdoHcy) to adenine and the corresponding thioribose, 5'-methylthioribose and S-ribosylhomocysteine, respectively. Also cleaves 5'-deoxyadenosine, a toxic by-product of radical S-adenosylmethionine (SAM) enzymes, into 5-deoxyribose and adenine. The polypeptide is 5'-methylthioadenosine/S-adenosylhomocysteine nucleosidase (Tolumonas auensis (strain DSM 9187 / NBRC 110442 / TA 4)).